The chain runs to 1020 residues: Sodium/potassium-transporting ATPase subunit alpha-2 (1020 aa).

Positions 1–5 (MGRGA) are excised as a propeptide. Positions 1 to 31 (MGRGAGREYSPAATTAENGGGKKKQKEKELD) are disordered. The Cytoplasmic portion of the chain corresponds to 6 to 85 (GREYSPAATT…NALTPPPTTP (80 aa)). A Phosphoserine modification is found at serine 10. An interaction with phosphoinositide-3 kinase region spans residues 80-82 (PPP). The chain crosses the membrane as a helical span at residues 86 to 106 (EWVKFCRQLFGGFSILLWIGA). The Extracellular segment spans residues 107 to 129 (ILCFLAYGIQAAMEDEPSNDNLY). A helical membrane pass occupies residues 130–150 (LGVVLAAVVIVTGCFSYYQEA). At 151-286 (KSSKIMDSFK…VGRTPIAMEI (136 aa)) the chain is on the cytoplasmic side. Positions 212–227 (DNSSLTGESEPQTRSP) are enriched in polar residues. Residues 212 to 231 (DNSSLTGESEPQTRSPEFTH) form a disordered region. The helical transmembrane segment at 287-306 (EHFIQLITGVAVFPGVSFFV) threads the bilayer. The Extracellular portion of the chain corresponds to 307-318 (LSLILGYSWLEA). A helical transmembrane segment spans residues 319-336 (VIFLIGIIVANVPEGLLA). The Cytoplasmic segment spans residues 337 to 769 (TVTVCLTLTA…EEGRLVFDNL (433 aa)). Residue aspartate 374 is the 4-aspartylphosphate intermediate of the active site. 4 positions are modified to phosphoserine: serine 439, serine 450, serine 496, and serine 559. Threonine 570 bears the Phosphothreonine mark. Residues serine 587 and serine 672 each carry the phosphoserine modification. 2 residues coordinate Mg(2+): aspartate 714 and aspartate 718. Residues 770-789 (KKSIAYTLTSNIPEITPFLL) traverse the membrane as a helical segment. Topologically, residues 790–799 (FIIANIPLPL) are extracellular. Residues 800–820 (GTVTILCIDLGTDMVPAISLA) traverse the membrane as a helical segment. At 821–840 (YEAAESDIMKRQPRNSQTDK) the chain is on the cytoplasmic side. Phosphoserine is present on serine 826. A helical membrane pass occupies residues 841 to 863 (LVNERLISMAYGQIGMIQALGGF). The Extracellular segment spans residues 864–915 (FTYFVILAENGFLPSRLLGIRLDWDDRTMNDLEDSYGQEWTYEQRKVVEFTC). A helical transmembrane segment spans residues 916–935 (HTAFFASIVVVQWADLIICK). The Cytoplasmic segment spans residues 936-948 (TRRNSVFQQGMKN). Serine 940 is subject to Phosphoserine; by PKA. The chain crosses the membrane as a helical span at residues 949-967 (KILIFGLLEETALAAFLSY). The Extracellular segment spans residues 968–982 (CPGMGVALRMYPLKV). The chain crosses the membrane as a helical span at residues 983 to 1003 (TWWFCAFPYSLLIFIYDEVRK). The Cytoplasmic portion of the chain corresponds to 1004–1020 (LILRRYPGGWVEKETYY).

The protein belongs to the cation transport ATPase (P-type) (TC 3.A.3) family. Type IIC subfamily. In terms of assembly, the sodium/potassium-transporting ATPase is composed of a catalytic alpha subunit, an auxiliary non-catalytic beta subunit and an additional regulatory subunit. Interacts with regulatory subunit FXYD1.

It is found in the membrane. It localises to the cell membrane. It catalyses the reaction K(+)(out) + Na(+)(in) + ATP + H2O = K(+)(in) + Na(+)(out) + ADP + phosphate + H(+). Its function is as follows. This is the catalytic component of the active enzyme, which catalyzes the hydrolysis of ATP coupled with the exchange of sodium and potassium ions across the plasma membrane. This action creates the electrochemical gradient of sodium and potassium, providing the energy for active transport of various nutrients. This chain is Sodium/potassium-transporting ATPase subunit alpha-2 (ATP1A2), found in Pongo abelii (Sumatran orangutan).